A 516-amino-acid chain; its full sequence is MFGDFVEKLPQKLPQKLDIPLIINVILSIAAIALIRALAISILRQYRLRKLPLVNGVGVFESSQKAKQNFLFNAEGLLENGFTKSTKAFRMATDDSEVLILSPDYIDEIRNDKRLSLTHALAEDFLGHIPAFVNFSPQKGLNDMAGDILQKKLTQSLDLSTEAALALQEQWTDNKEWHALNAKTTMVEIVARISSRVFLGLELCRNPAWLRITADYTVNVFFGVMALKKWPKYLHPFVWRFVPEVRTVRDQIQEAVNLIQPVVEKRTAEGKSPSSRKTYSDTIQWANELANGRPYDPALLQLGFSLAAIHTTSDLLSQILYNICAYPEYIDPLREEIVTVLKEHGMTKAGLFKMKLMDSIMKESQRLKPGAMLMMRRMVLEDITLSNGVFLPRGVQIGIPTRSHFDPSFYTDPERFDGYRYVKMDDDPQREKSRHFVSTSPEHLAFGHGKHACPGRFFASQEIKIALCHILMKYEFKLADGSKPTVMKMGWVLSSDPMVQLMVRKREGVDENLLYK.

Residues 22 to 42 traverse the membrane as a helical segment; sequence IINVILSIAAIALIRALAISI. Residue cysteine 453 participates in heme binding.

Belongs to the cytochrome P450 family. Heme serves as cofactor.

The protein localises to the membrane. It participates in secondary metabolite biosynthesis; terpenoid biosynthesis. Functionally, cytochrome P450 monooxygenase; part of the gene cluster that mediates the biosynthesis of the meroterpenoids nectripenoids A and B, as well as cochliquninone D and isocochliquninone E. The pathway probably begins with the HR-PKS ntnH that catalyzes two chain-extension steps to form a reduced triketide, which then primes the SAT domain in the NR-PKS ntnG to initiate three more cycles of extension to give a linear hexaketide corresponding to the polyketide part of nectripenoids. The FAD-dependent monooxygenase ntnJ then performs an oxidative decarboxylation at C11 of the ntnH/ntnG product, via an electrophilic aromatic hydroxylation with concomitant ipso-decarboxylation. The membrane-bound polyprenyl transferase ntnF then introduces a farnesyl group before the FAD-dependent monooxygenase ntnK functions as the first epoxidase on terminal C12'-C13' olefin, followed by a second epoxidation on C7'-C8' catalyzed by ntnA. The terpene cyclase/mutase ntnI then initiates the sequential tricyclic ring formation through protonation of the terminal epoxide and catalyzes the regioselective and stereoselective 6/6/6-tricyclic ring formation. The cytochrome P450 monooxygenase ntnM may then hydroxylate C1'. This chain is Cytochrome P450 monooxygenase ntnM, found in Nectria sp.